The following is a 262-amino-acid chain: Global transcriptional regulator CodY (262 aa).

The interval 1–159 is GAF domain; that stretch reads MAHLLEKTRK…ASTVVGIQLL (159 aa). A DNA-binding region (H-T-H motif) is located at residues 207–226; sequence ASVIADRIGITRSVIVNALR.

The protein belongs to the CodY family.

It is found in the cytoplasm. DNA-binding global transcriptional regulator which is involved in the adaptive response to starvation and acts by directly or indirectly controlling the expression of numerous genes in response to nutrient availability. During rapid exponential growth, CodY is highly active and represses genes whose products allow adaptation to nutrient depletion. The polypeptide is Global transcriptional regulator CodY (Streptococcus pneumoniae serotype 4 (strain ATCC BAA-334 / TIGR4)).